The sequence spans 675 residues: Rho guanine nucleotide exchange factor 37 (675 aa).

Positions Met1 to Arg26 are disordered. Residues His30–Tyr213 form the DH domain. In terms of domain architecture, BAR spans Leu254 to Ala455. SH3 domains follow at residues Gly506 to Val569 and Pro602 to Ser665.

In terms of biological role, may act as a guanine nucleotide exchange factor (GEF). This is Rho guanine nucleotide exchange factor 37 (ARHGEF37) from Homo sapiens (Human).